The sequence spans 413 residues: Queuine tRNA-ribosyltransferase accessory subunit 2 (413 aa).

Residues 298-321 (LEKSETSGAERNGDVGAESEEPDA) form a disordered region. Residues cysteine 349, cysteine 351, cysteine 354, and histidine 380 each coordinate Zn(2+).

Belongs to the queuine tRNA-ribosyltransferase family. QTRT2 subfamily. Heterodimer of a catalytic subunit qtrt1 and an accessory subunit qtrt2. Requires Zn(2+) as cofactor.

It is found in the cytoplasm. The protein localises to the mitochondrion outer membrane. Functionally, non-catalytic subunit of the queuine tRNA-ribosyltransferase (TGT) that catalyzes the base-exchange of a guanine (G) residue with queuine (Q) at position 34 (anticodon wobble position) in tRNAs with GU(N) anticodons (tRNA-Asp, -Asn, -His and -Tyr), resulting in the hypermodified nucleoside queuosine (7-(((4,5-cis-dihydroxy-2-cyclopenten-1-yl)amino)methyl)-7-deazaguanosine). The protein is Queuine tRNA-ribosyltransferase accessory subunit 2 of Xenopus tropicalis (Western clawed frog).